We begin with the raw amino-acid sequence, 494 residues long: Glycerol kinase (494 aa).

ADP is bound at residue T13. ATP contacts are provided by T13, T14, and S15. Sn-glycerol 3-phosphate is bound at residue T13. An ADP-binding site is contributed by R17. 4 residues coordinate sn-glycerol 3-phosphate: R83, E84, Y135, and D244. The glycerol site is built by R83, E84, Y135, D244, and Q245. 2 residues coordinate ADP: T266 and G309. The ATP site is built by T266, G309, Q313, and G410. The ADP site is built by G410 and N414.

Belongs to the FGGY kinase family.

It carries out the reaction glycerol + ATP = sn-glycerol 3-phosphate + ADP + H(+). Its pathway is polyol metabolism; glycerol degradation via glycerol kinase pathway; sn-glycerol 3-phosphate from glycerol: step 1/1. With respect to regulation, inhibited by fructose 1,6-bisphosphate (FBP). Functionally, key enzyme in the regulation of glycerol uptake and metabolism. Catalyzes the phosphorylation of glycerol to yield sn-glycerol 3-phosphate. The protein is Glycerol kinase of Shewanella sp. (strain ANA-3).